A 763-amino-acid polypeptide reads, in one-letter code: Polyribonucleotide nucleotidyltransferase (763 aa).

Positions 526 and 532 each coordinate Mg(2+). Positions 592 to 651 constitute a KH domain; it reads PRITTIKVPVDKIGEVIGPKGKMINSITEETGAQISIEDDGTVFVGAADGLSAQAAIDKI. In terms of domain architecture, S1 motif spans 663 to 732; it reads GERFLGTVVK…NRGKISLVLV (70 aa). Positions 739–763 are disordered; the sequence is SAESAGDKGAEKAEGAAADVTPAEA. Residues 743 to 752 are compositionally biased toward basic and acidic residues; that stretch reads AGDKGAEKAE.

Belongs to the polyribonucleotide nucleotidyltransferase family. The cofactor is Mg(2+).

Its subcellular location is the cytoplasm. It catalyses the reaction RNA(n+1) + phosphate = RNA(n) + a ribonucleoside 5'-diphosphate. Functionally, involved in mRNA degradation. Catalyzes the phosphorolysis of single-stranded polyribonucleotides processively in the 3'- to 5'-direction. This is Polyribonucleotide nucleotidyltransferase from Mycolicibacterium smegmatis (strain ATCC 700084 / mc(2)155) (Mycobacterium smegmatis).